The sequence spans 274 residues: SWI/SNF chromatin-remodeling complex subunit snf30 (274 aa).

Composition is skewed to polar residues over residues 123 to 150 (TLSYPPSNGDSSSYANGTDLHGNTGTMQ) and 157 to 167 (PSLTRSDSVSS). Residues 123 to 167 (TLSYPPSNGDSSSYANGTDLHGNTGTMQQEEKANPSLTRSDSVSS) form a disordered region.

Component of the SWI/SNF global transcription activator complex composed of at least arp9, arp42, snf5, snf22, snf30, sbf59, sol1, ssr1, ssr2, ssr3, ssr4 and tfg3.

It localises to the cytoplasm. The protein resides in the nucleus. Component of the SWI/SNF complex, an ATP-dependent chromatin remodeling complex, required for the positive and negative regulation of gene expression of a large number of genes. It changes chromatin structure by altering DNA-histone contacts within a nucleosome, leading eventually to a change in nucleosome position, thus facilitating or repressing binding of gene-specific transcription factors. The polypeptide is SWI/SNF chromatin-remodeling complex subunit snf30 (snf30) (Schizosaccharomyces pombe (strain 972 / ATCC 24843) (Fission yeast)).